The following is a 432-amino-acid chain: Glyceraldehyde-3-phosphate dehydrogenase, testis-specific (432 aa).

A testis-specific N-terminal extension region spans residues 1–97 (MSRRDVVLTN…PPPPPPPKPA (97 aa)). Residues 40–101 (PPPPKVEEPP…PPPKPAKELT (62 aa)) are disordered. Positions 44–55 (KVEEPPPPKEEP) are enriched in basic and acidic residues. 2 stretches are compositionally biased toward pro residues: residues 56 to 67 (PPPPPPPPPPQI) and 75 to 95 (APPP…PPPK). NAD(+) is bound by residues 109–110 (RI), D130, K175, Y197, and T217. Residues 247–249 (SCT), T278, 307–308 (TG), and R330 contribute to the D-glyceraldehyde 3-phosphate site. C248 acts as the Nucleophile in catalysis. Residue S350 is modified to Phosphoserine. Position 412 (N412) interacts with NAD(+).

This sequence belongs to the glyceraldehyde-3-phosphate dehydrogenase family. In terms of assembly, homotetramer. As to expression, expressed in both head and flagellum of epididymal sperm.

Its subcellular location is the cytoplasm. The catalysed reaction is D-glyceraldehyde 3-phosphate + phosphate + NAD(+) = (2R)-3-phospho-glyceroyl phosphate + NADH + H(+). It functions in the pathway carbohydrate degradation; glycolysis; pyruvate from D-glyceraldehyde 3-phosphate: step 1/5. Its function is as follows. May play an important role in regulating the switch between different pathways for energy production during spermiogenesis and in the spermatozoon. Required for sperm motility and male fertility. This is Glyceraldehyde-3-phosphate dehydrogenase, testis-specific (Gapdhs) from Rattus norvegicus (Rat).